The following is a 446-amino-acid chain: Probable glucuronosyltransferase Os04g0650300 (446 aa).

Residues 1-30 (MKLPLLRPLWPMLSPAAGSPDSPPEPSKPS) are Cytoplasmic-facing. A helical; Signal-anchor for type II membrane protein membrane pass occupies residues 31-51 (LPAAWLLLHALFCATSMAVGF). Residues 52–446 (RFSRLIVYLL…TTLLNTEGQH (395 aa)) lie on the Lumenal side of the membrane. Asparagine 87 carries N-linked (GlcNAc...) asparagine glycosylation. The segment at 425 to 446 (QQDAKPETPLKRTTLLNTEGQH) is disordered.

It belongs to the glycosyltransferase 43 family.

It localises to the golgi apparatus membrane. Its function is as follows. Involved in the synthesis of glucuronoxylan hemicellulose in secondary cell walls. In Oryza sativa subsp. japonica (Rice), this protein is Probable glucuronosyltransferase Os04g0650300.